Here is a 238-residue protein sequence, read N- to C-terminus: Sugar fermentation stimulation protein homolog (238 aa).

The protein belongs to the SfsA family.

This chain is Sugar fermentation stimulation protein homolog, found in Klebsiella pneumoniae (strain 342).